The primary structure comprises 61 residues: Translational regulator CsrA (61 aa).

This sequence belongs to the CsrA/RsmA family. As to quaternary structure, homodimer; the beta-strands of each monomer intercalate to form a hydrophobic core, while the alpha-helices form wings that extend away from the core.

The protein resides in the cytoplasm. Its function is as follows. A key translational regulator that binds mRNA to regulate translation initiation and/or mRNA stability. Mediates global changes in gene expression, shifting from rapid growth to stress survival by linking envelope stress, the stringent response and the catabolite repression systems. Usually binds in the 5'-UTR; binding at or near the Shine-Dalgarno sequence prevents ribosome-binding, repressing translation, binding elsewhere in the 5'-UTR can activate translation and/or stabilize the mRNA. Its function is antagonized by small RNA(s). This Glaesserella parasuis serovar 5 (strain SH0165) (Haemophilus parasuis) protein is Translational regulator CsrA.